The chain runs to 181 residues: Trafficking protein particle complex subunit 3-like protein (181 aa).

Cys68 carries the S-palmitoyl cysteine lipid modification.

Belongs to the TRAPP small subunits family. BET3 subfamily. In terms of assembly, homodimer. Component of the multisubunit TRAPP (transport protein particle) complex, which includes at least TRAPPC2, TRAPPC2L, TRAPPC3, TRAPPC3L, TRAPPC4, TRAPPC5, TRAPPC8, TRAPPC9, TRAPPC10, TRAPPC11 and TRAPPC12.

It localises to the golgi apparatus. It is found in the cis-Golgi network. The protein resides in the endoplasmic reticulum. Its function is as follows. May play a role in vesicular transport from endoplasmic reticulum to Golgi. The polypeptide is Trafficking protein particle complex subunit 3-like protein (Trappc3l) (Mus musculus (Mouse)).